Consider the following 757-residue polypeptide: Elongation factor G, mitochondrial (757 aa).

A mitochondrion-targeting transit peptide spans 1–41 (MLERAALLHRLRLPAHSLPFIYNGALFGGAKRSFSATSKRC). The tr-type G domain maps to 66–347 (KLLRNIGVSA…AIVDYLPEPS (282 aa)). GTP is bound by residues 75-82 (AHIDSGKT), 146-150 (DTPGH), and 200-203 (NKMD).

This sequence belongs to the TRAFAC class translation factor GTPase superfamily. Classic translation factor GTPase family. EF-G/EF-2 subfamily.

It localises to the mitochondrion. It participates in protein biosynthesis; polypeptide chain elongation. Functionally, mitochondrial GTPase that catalyzes the GTP-dependent ribosomal translocation step during translation elongation. During this step, the ribosome changes from the pre-translocational (PRE) to the post-translocational (POST) state as the newly formed A-site-bound peptidyl-tRNA and P-site-bound deacylated tRNA move to the P and E sites, respectively. Catalyzes the coordinated movement of the two tRNA molecules, the mRNA and conformational changes in the ribosome. The sequence is that of Elongation factor G, mitochondrial from Eremothecium gossypii (strain ATCC 10895 / CBS 109.51 / FGSC 9923 / NRRL Y-1056) (Yeast).